The primary structure comprises 143 residues: Endoribonuclease YbeY (143 aa).

Residues histidine 111, histidine 115, and aspartate 121 each coordinate Zn(2+).

The protein belongs to the endoribonuclease YbeY family. The cofactor is Zn(2+).

Its subcellular location is the cytoplasm. Single strand-specific metallo-endoribonuclease involved in late-stage 70S ribosome quality control and in maturation of the 3' terminus of the 16S rRNA. This Cytophaga hutchinsonii (strain ATCC 33406 / DSM 1761 / CIP 103989 / NBRC 15051 / NCIMB 9469 / D465) protein is Endoribonuclease YbeY.